We begin with the raw amino-acid sequence, 352 residues long: C-C chemokine receptor type 5 (352 aa).

At 1-30 (MDYQVSSPTYDIDYYTSEPCQKINVKQIAG) the chain is on the extracellular side. Tyr3 bears the Sulfotyrosine mark. O-linked (GalNAc...) serine glycans are attached at residues Ser6 and Ser7. Residues Tyr10, Tyr14, and Tyr15 each carry the sulfotyrosine modification. 2 disulfides stabilise this stretch: Cys20–Cys269 and Cys101–Cys178. Residues 31–58 (RLLPPLYSLVFIFGFVGNILVVLILINC) form a helical membrane-spanning segment. Over 59–68 (KRLKSMTDIY) the chain is Cytoplasmic. Residues 69–89 (LLNLAISDLLFLLTVPFWAHY) traverse the membrane as a helical segment. Residues 90-102 (AAAQWDFGNTMCQ) are Extracellular-facing. The chain crosses the membrane as a helical span at residues 103–124 (LLTGLYFIGFFSGIFFIILLTI). The Cytoplasmic portion of the chain corresponds to 125 to 141 (DRYLAIVHAVFALKART). The helical transmembrane segment at 142–166 (VTFGVVTSVITWVVAVFASLPGIIF) threads the bilayer. Residues 167–198 (TRSQREGLHYTCSSHFPYSQYQFWKNFQTLKI) lie on the Extracellular side of the membrane. A helical transmembrane segment spans residues 199 to 218 (VILGLVLPLLVMVICYSGIL). The Cytoplasmic portion of the chain corresponds to 219-235 (KTLLRCRNEKKRHRAVR). The chain crosses the membrane as a helical span at residues 236-260 (LIFTIMIVYFLFWAPYNIVLLLNTF). Residues 261–277 (QEFFGLNNCSSSNRLDQ) are Extracellular-facing. A helical transmembrane segment spans residues 278 to 301 (AMQVTETLGMTHCCINPIIYAFVG). Topologically, residues 302–352 (EKFRNYLLVFFQKHIAKRFCKCCSIFQQEAPERASSVYTRSTGEQEISVGL) are cytoplasmic. Residues Cys321, Cys323, and Cys324 are each lipidated (S-palmitoyl cysteine). Phosphoserine; by BARK1 is present on residues Ser336, Ser337, Ser342, and Ser349.

Belongs to the G-protein coupled receptor 1 family. Interacts with PRAF2. Efficient ligand binding to CCL3/MIP-1alpha and CCL4/MIP-1beta requires sulfation, O-glycosylation and sialic acid modifications. Glycosylation on Ser-6 is required for efficient binding of CCL4. Interacts with GRK2. Interacts with ARRB1 and ARRB2. Interacts with CNIH4. Interacts with S100A4; this interaction stimulates T-lymphocyte chemotaxis. Sulfated on at least 2 of the N-terminal tyrosines. Sulfation is required for efficient binding of the chemokines, CCL3 and CCL4. In terms of processing, palmitoylation in the C-terminal is important for cell surface expression. Post-translationally, phosphorylation on serine residues in the C-terminal is stimulated by binding CC chemokines especially by APO-RANTES. O-glycosylated, but not N-glycosylated. Ser-6 appears to be the major site even if Ser-7 may be also O-glycosylated. Also sialylated glycans present which contribute to chemokine binding. Thr-16 and Ser-17 may also be glycosylated and, if so, with small moieties such as a T-antigen.

It localises to the cell membrane. In terms of biological role, receptor for a number of inflammatory CC-chemokines including CCL3/MIP-1-alpha, CCL4/MIP-1-beta and RANTES and subsequently transduces a signal by increasing the intracellular calcium ion level. May play a role in the control of granulocytic lineage proliferation or differentiation. Participates in T-lymphocyte migration to the infection site by acting as a chemotactic receptor. The sequence is that of C-C chemokine receptor type 5 (CCR5) from Theropithecus gelada (Gelada baboon).